The sequence spans 86 residues: Weak neurotoxin 5 (86 aa).

An N-terminal signal peptide occupies residues 1–21; that stretch reads MKTLLLTLVVVTIVCLDLGYT. Disulfide bonds link C24-C45, C27-C32, C38-C63, C67-C78, and C79-C84.

It belongs to the three-finger toxin family. Ancestral subfamily. Orphan group II sub-subfamily. As to expression, expressed by the venom gland.

Its subcellular location is the secreted. Its function is as follows. Binds with low affinity to muscular and very low affinity to neuronal (alpha-7/CHRNA7) nicotinic acetylcholine receptor (nAChR). This Naja sputatrix (Malayan spitting cobra) protein is Weak neurotoxin 5.